A 133-amino-acid polypeptide reads, in one-letter code: Otoraplin (133 aa).

The N-terminal stretch at 1–23 (MAKTFYVVVIVLCLGFIHQKAYG) is a signal peptide. Intrachain disulfides connect Cys-35-Cys-40 and Cys-58-Cys-132. Positions 42–115 (YAISFGRAED…PSSLVTELTV (74 aa)) constitute an SH3 domain.

It belongs to the MIA/OTOR family.

It is found in the secreted. The chain is Otoraplin (OTOR) from Aquarana catesbeiana (American bullfrog).